Reading from the N-terminus, the 356-residue chain is uncharacterized protein (356 aa).

Its subcellular location is the cytoplasm. The protein resides in the nucleus. This is an uncharacterized protein from Saccharomyces cerevisiae (strain ATCC 204508 / S288c) (Baker's yeast).